The sequence spans 472 residues: Trigger factor (472 aa).

One can recognise a PPIase FKBP-type domain in the interval 174 to 261; that stretch reads GDIAVLGFKG…LKDLKTRELP (88 aa). Residues 430–472 are disordered; the sequence is ENSTLTEQAPAADDADDAEKPAAKKKPAAKKKTPAKSKTDAEA. The segment covering 452–464 has biased composition (basic residues); that stretch reads AKKKPAAKKKTPA.

Belongs to the FKBP-type PPIase family. Tig subfamily.

Its subcellular location is the cytoplasm. It carries out the reaction [protein]-peptidylproline (omega=180) = [protein]-peptidylproline (omega=0). Its function is as follows. Involved in protein export. Acts as a chaperone by maintaining the newly synthesized protein in an open conformation. Functions as a peptidyl-prolyl cis-trans isomerase. This Parasynechococcus marenigrum (strain WH8102) protein is Trigger factor.